A 297-amino-acid chain; its full sequence is UTP--glucose-1-phosphate uridylyltransferase YngB (297 aa).

A signal peptide spans 1–27; that stretch reads MRKKVRKAVIPAAGLGTRFLPATKAQP.

This sequence belongs to the UDPGP type 2 family. Homodimer.

It carries out the reaction alpha-D-glucose 1-phosphate + UTP + H(+) = UDP-alpha-D-glucose + diphosphate. It participates in glycolipid metabolism; diglucosyl-diacylglycerol biosynthesis. Catalyzes the formation of UDP-glucose from glucose-1-phosphate and UTP. This is an intermediate step in the biosynthesis of diglucosyl-diacylglycerol (Glc2-DAG), i.e. the predominant glycolipid found in B.subtilis membrane, which is also used as a membrane anchor for lipoteichoic acid (LTA). YngB contributes to wall teichoic acid (WTA) glucosylation and glycolipid formation under anaerobic fermentative growth conditions. Might also enter other glycosylation pathways, leading to the decorating of other cell envelope components with glucose residues under anaerobic or other growth conditions. In Bacillus subtilis (strain 168), this protein is UTP--glucose-1-phosphate uridylyltransferase YngB (yngB).